The primary structure comprises 139 residues: Putative nickel-responsive regulator (139 aa).

His-79, His-90, His-92, and Cys-98 together coordinate Ni(2+).

Belongs to the transcriptional regulatory CopG/NikR family. Requires Ni(2+) as cofactor.

In terms of biological role, transcriptional regulator. This Solidesulfovibrio magneticus (strain ATCC 700980 / DSM 13731 / RS-1) (Desulfovibrio magneticus) protein is Putative nickel-responsive regulator.